The sequence spans 359 residues: Dihydroorotate dehydrogenase (quinone) (359 aa).

FMN contacts are provided by residues 68-72 (AGFDK) and T92. A substrate-binding site is contributed by K72. 117–121 (NRMGF) contributes to the substrate binding site. Positions 145 and 176 each coordinate FMN. N176 provides a ligand contact to substrate. Catalysis depends on S179, which acts as the Nucleophile. N181 serves as a coordination point for substrate. K212 and T240 together coordinate FMN. Position 241-242 (241-242 (NT)) interacts with substrate. Residues G266, G295, and 316–317 (YT) contribute to the FMN site.

The protein belongs to the dihydroorotate dehydrogenase family. Type 2 subfamily. As to quaternary structure, monomer. It depends on FMN as a cofactor.

The protein localises to the cell membrane. The enzyme catalyses (S)-dihydroorotate + a quinone = orotate + a quinol. The protein operates within pyrimidine metabolism; UMP biosynthesis via de novo pathway; orotate from (S)-dihydroorotate (quinone route): step 1/1. Catalyzes the conversion of dihydroorotate to orotate with quinone as electron acceptor. The polypeptide is Dihydroorotate dehydrogenase (quinone) (Corynebacterium striatum).